A 906-amino-acid polypeptide reads, in one-letter code: Alanine--tRNA ligase (906 aa).

Zn(2+)-binding residues include H600, H604, C703, and H707.

The protein belongs to the class-II aminoacyl-tRNA synthetase family. In terms of assembly, homodimer. The cofactor is Zn(2+).

Its subcellular location is the cytoplasm. It carries out the reaction tRNA(Ala) + L-alanine + ATP = L-alanyl-tRNA(Ala) + AMP + diphosphate. In terms of biological role, catalyzes the attachment of alanine to tRNA(Ala) in a two-step reaction: alanine is first activated by ATP to form Ala-AMP and then transferred to the acceptor end of tRNA(Ala). Incorrectly charged aminoacyl-tRNA(Ala) is also edited in situ by the editing domain. The protein is Alanine--tRNA ligase (alaS) of Archaeoglobus fulgidus (strain ATCC 49558 / DSM 4304 / JCM 9628 / NBRC 100126 / VC-16).